A 1176-amino-acid chain; its full sequence is Myosin light chain kinase, smooth muscle (1176 aa).

The segment at 1 to 41 (MDFRANLQRQVKPKTLSEEERKVHGPQQVDFRSVLAKKGTP) is actin-binding (calcium/calmodulin-sensitive). The interval 1 to 354 (MDFRANLQRQ…SEKRPESRGT (354 aa)) is disordered. The segment at 26–41 (PQQVDFRSVLAKKGTP) is calmodulin-binding. Residues 43-55 (TPVPEKVPPPKPA) show a composition bias toward pro residues. 16 tandem repeats follow at residues 100 to 111 (FLKPVGNAKLAD), 112 to 123 (TPKPLSSTKPAE), 124 to 135 (TPKPLGNVKPAE), 136 to 147 (TPKPLGSTKPAE), 148 to 159 (TPKPLGSTKPAE), 160 to 171 (TPKPLGNVKPAE), 172 to 183 (TPKPLGNIKPTE), 184 to 195 (TPKPLGSTKPAE), 196 to 207 (TPKPLGSTKPAE), 208 to 219 (TPKPLGNVKPAE), 220 to 231 (TPKPLGNVKPAE), 232 to 243 (TPKPLGNVKPAE), 244 to 255 (TPKPVSNAKPAE), 256 to 267 (TLKPVGNAKPAE), 268 to 279 (TPKPLSNVKPAE), and 280 to 291 (TPKLVGNAKPAE). The tract at residues 100–291 (FLKPVGNAKL…KLVGNAKPAE (192 aa)) is 16 X 12 AA tandem repeats. Ser-202 is modified (phosphoserine). Residues 319-721 (PTGKEELKKE…TVTVNTEQKV (403 aa)) are actin-binding (calcium/calmodulin-insensitive). The segment covering 320–335 (TGKEELKKEIKNDVNC) has biased composition (basic and acidic residues). The Ig-like C2-type 1 domain maps to 356–444 (PTFEEKLQDL…GQAESSCQVT (89 aa)). A disulfide bond links Cys-377 and Cys-428. The tract at residues 448–497 (PDAPTSENAKAPEMKARRPKSSLPPVLGTESDATVKKKPAPKTPPKAAMP) is disordered. Residues 498–586 (PQIIQFPEDQ…GSRQAQVNLT (89 aa)) form the Ig-like C2-type 2 domain. The Fibronectin type-III domain maps to 594–686 (PAGTPCASDI…QESELTALGE (93 aa)). The segment at 673-707 (SEPSQESELTALGEKPEEEPKDEVEVSDDDEKEPE) is disordered. Residues 688–706 (PEEEPKDEVEVSDDDEKEP) are compositionally biased toward acidic residues. Ser-699 carries the post-translational modification Phosphoserine. Residue Tyr-710 is modified to Phosphotyrosine; by ABL1. The Protein kinase domain occupies 725–980 (YDIEERLGSG…CTQCLQHPWL (256 aa)). ATP is bound by residues 731–739 (LGSGKFGQV) and Lys-754. Phosphotyrosine; by ABL1 is present on Tyr-836. Asp-846 functions as the Proton acceptor in the catalytic mechanism. Position 896 is a phosphotyrosine; by ABL1 (Tyr-896). A calmodulin-binding region spans residues 972-1035 (TQCLQHPWLM…SGLSGRKSST (64 aa)). Phosphoserine occurs at positions 1020, 1021, 1033, 1034, and 1037. A Phosphothreonine modification is found at Thr-1039. Phosphoserine is present on Ser-1040. Residues 1069–1158 (PYFSKTIRDL…GEATCTAELI (90 aa)) enclose the Ig-like C2-type 3 domain. A disulfide bridge links Cys-1090 with Cys-1142.

This sequence belongs to the protein kinase superfamily. CAMK Ser/Thr protein kinase family. In terms of assembly, all isoforms including Telokin bind calmodulin. Interacts with SVIL. Interacts with CTTN; this interaction is reduced during thrombin-induced endothelial cell (EC) contraction but is promoted by the barrier-protective agonist sphingosine 1-phosphate (S1P) within lamellipodia. A complex made of ABL1, CTTN and MYLK regulates cortical actin-based cytoskeletal rearrangement critical to sphingosine 1-phosphate (S1P)-mediated endothelial cell (EC) barrier enhancement. Binds to NAA10/ARD1 and PTK2B/PYK2. Requires Mg(2+) as cofactor. It depends on Ca(2+) as a cofactor. Post-translationally, the C-terminus is deglutamylated by AGTPBP1/CCP1, AGBL1/CCP4 and AGBL4/CCP6, leading to the formation of Myosin light chain kinase, smooth muscle, deglutamylated form. The consequences of C-terminal deglutamylation are unknown. Can probably be down-regulated by phosphorylation. Tyrosine phosphorylation by ABL1 increases kinase activity, reverses MLCK-mediated inhibition of Arp2/3-mediated actin polymerization, and enhances CTTN-binding. Phosphorylation by SRC promotes CTTN binding.

It localises to the cytoplasm. It is found in the cell projection. The protein resides in the lamellipodium. Its subcellular location is the cleavage furrow. The protein localises to the cytoskeleton. It localises to the stress fiber. It carries out the reaction L-seryl-[myosin light chain] + ATP = O-phospho-L-seryl-[myosin light chain] + ADP + H(+). The enzyme catalyses L-threonyl-[myosin light chain] + ATP = O-phospho-L-threonyl-[myosin light chain] + ADP + H(+). Its function is as follows. Calcium/calmodulin-dependent myosin light chain kinase implicated in smooth muscle contraction via phosphorylation of myosin light chains (MLC). Also regulates actin-myosin interaction through a non-kinase activity. Phosphorylates PTK2B/PYK2 and myosin light-chains. Involved in the inflammatory response (e.g. apoptosis, vascular permeability, leukocyte diapedesis), cell motility and morphology, airway hyperreactivity and other activities relevant to asthma. Required for tonic airway smooth muscle contraction that is necessary for physiological and asthmatic airway resistance. Necessary for gastrointestinal motility. Implicated in the regulation of endothelial as well as vascular permeability, probably via the regulation of cytoskeletal rearrangements. In the nervous system it has been shown to control the growth initiation of astrocytic processes in culture and to participate in transmitter release at synapses formed between cultured sympathetic ganglion cells. Critical participant in signaling sequences that result in fibroblast apoptosis. Plays a role in the regulation of epithelial cell survival. Required for epithelial wound healing, especially during actomyosin ring contraction during purse-string wound closure. Mediates RhoA-dependent membrane blebbing. Triggers TRPC5 channel activity in a calcium-dependent signaling, by inducing its subcellular localization at the plasma membrane. Promotes cell migration (including tumor cells) and tumor metastasis. PTK2B/PYK2 activation by phosphorylation mediates ITGB2 activation and is thus essential to trigger neutrophil transmigration during acute lung injury (ALI). May regulate optic nerve head astrocyte migration. Probably involved in mitotic cytoskeletal regulation. Regulates tight junction probably by modulating ZO-1 exchange in the perijunctional actomyosin ring. Mediates burn-induced microvascular barrier injury; triggers endothelial contraction in the development of microvascular hyperpermeability by phosphorylating MLC. Essential for intestinal barrier dysfunction. Mediates Giardia spp.-mediated reduced epithelial barrier function during giardiasis intestinal infection via reorganization of cytoskeletal F-actin and tight junctional ZO-1. Necessary for hypotonicity-induced Ca(2+) entry and subsequent activation of volume-sensitive organic osmolyte/anion channels (VSOAC) in cervical cancer cells. This is Myosin light chain kinase, smooth muscle (MYLK) from Bos taurus (Bovine).